The sequence spans 364 residues: Aminomethyltransferase (364 aa).

This sequence belongs to the GcvT family. The glycine cleavage system is composed of four proteins: P, T, L and H.

The enzyme catalyses N(6)-[(R)-S(8)-aminomethyldihydrolipoyl]-L-lysyl-[protein] + (6S)-5,6,7,8-tetrahydrofolate = N(6)-[(R)-dihydrolipoyl]-L-lysyl-[protein] + (6R)-5,10-methylene-5,6,7,8-tetrahydrofolate + NH4(+). The glycine cleavage system catalyzes the degradation of glycine. In Thermotoga sp. (strain RQ2), this protein is Aminomethyltransferase.